Consider the following 101-residue polypeptide: Apolipoprotein C-II (101 aa).

An N-terminal signal peptide occupies residues 1 to 17 (MGTRFLLALCLVLLVLG). The tract at residues 66–74 (AVDEKLRDL) is lipid binding. Positions 78 to 101 (STAAMSTYTGIFTDQVLSVLKGEE) are lipoprotein lipase cofactor.

It belongs to the apolipoprotein C2 family. Proapolipoprotein C-II is synthesized as a sialic acid containing glycoprotein which is subsequently desialylated prior to its proteolytic processing. Post-translationally, proapolipoprotein C-II, the major form found in plasma undergoes proteolytic cleavage of its N-terminal hexapeptide to generate apolipoprotein C-II, which occurs as the minor form in plasma.

It localises to the secreted. In terms of biological role, component of chylomicrons, very low-density lipoproteins (VLDL), low-density lipoproteins (LDL), and high-density lipoproteins (HDL) in plasma. Plays an important role in lipoprotein metabolism as an activator of lipoprotein lipase. Both proapolipoprotein C-II and apolipoprotein C-II can activate lipoprotein lipase. The polypeptide is Apolipoprotein C-II (APOC2) (Chlorocebus sabaeus (Green monkey)).